A 242-amino-acid polypeptide reads, in one-letter code: Orotidine 5'-phosphate decarboxylase (242 aa).

Substrate-binding positions include Asp16, Lys37, 64–73, Thr128, Arg190, Gln199, Gly219, and Arg220; that span reads DLKFHDIPNT. The active-site Proton donor is Lys66.

The protein belongs to the OMP decarboxylase family. Type 1 subfamily. As to quaternary structure, homodimer.

It catalyses the reaction orotidine 5'-phosphate + H(+) = UMP + CO2. Its pathway is pyrimidine metabolism; UMP biosynthesis via de novo pathway; UMP from orotate: step 2/2. Functionally, catalyzes the decarboxylation of orotidine 5'-monophosphate (OMP) to uridine 5'-monophosphate (UMP). This is Orotidine 5'-phosphate decarboxylase from Prochlorococcus marinus (strain AS9601).